The sequence spans 22 residues: FALESFWDGKGNASAHAMEMTK.

Belongs to the vitamin-B12 independent methionine synthase family. Zn(2+) serves as cofactor.

It is found in the cytoplasm. The enzyme catalyses 5-methyltetrahydropteroyltri-L-glutamate + L-homocysteine = tetrahydropteroyltri-L-glutamate + L-methionine. It participates in amino-acid biosynthesis; L-methionine biosynthesis via de novo pathway; L-methionine from L-homocysteine (MetE route): step 1/1. Catalyzes the transfer of a methyl group from 5-methyltetrahydrofolate to homocysteine resulting in methionine formation. The polypeptide is 5-methyltetrahydropteroyltriglutamate--homocysteine methyltransferase (Pseudotsuga menziesii (Douglas-fir)).